The chain runs to 445 residues: Phosphoglucosamine mutase (445 aa).

Catalysis depends on Ser102, which acts as the Phosphoserine intermediate. Residues Ser102, Asp241, Asp243, and Asp245 each coordinate Mg(2+). At Ser102 the chain carries Phosphoserine.

This sequence belongs to the phosphohexose mutase family. It depends on Mg(2+) as a cofactor. Post-translationally, activated by phosphorylation.

The catalysed reaction is alpha-D-glucosamine 1-phosphate = D-glucosamine 6-phosphate. In terms of biological role, catalyzes the conversion of glucosamine-6-phosphate to glucosamine-1-phosphate. This chain is Phosphoglucosamine mutase, found in Haemophilus influenzae (strain PittEE).